We begin with the raw amino-acid sequence, 266 residues long: Glucosamine-6-phosphate deaminase (266 aa).

Residue aspartate 72 is the Proton acceptor; for enolization step of the active site. Catalysis depends on aspartate 141, which acts as the For ring-opening step. The active-site Proton acceptor; for ring-opening step is histidine 143. Glutamate 148 serves as the catalytic For ring-opening step.

The protein belongs to the glucosamine/galactosamine-6-phosphate isomerase family. NagB subfamily. Homohexamer; trimer of disulfide-linked dimers.

The enzyme catalyses alpha-D-glucosamine 6-phosphate + H2O = beta-D-fructose 6-phosphate + NH4(+). Its pathway is amino-sugar metabolism; N-acetylneuraminate degradation; D-fructose 6-phosphate from N-acetylneuraminate: step 5/5. Its activity is regulated as follows. Allosterically activated by N-acetylglucosamine 6-phosphate (GlcNAc6P). Catalyzes the reversible isomerization-deamination of glucosamine 6-phosphate (GlcN6P) to form fructose 6-phosphate (Fru6P) and ammonium ion. This Escherichia coli O6:H1 (strain CFT073 / ATCC 700928 / UPEC) protein is Glucosamine-6-phosphate deaminase.